Reading from the N-terminus, the 660-residue chain is Methionine--tRNA ligase 1 (660 aa).

The 'HIGH' region signature appears at 15 to 25; it reads YYPSGKLHIGH. A 'KMSKS' region motif is present at residues 310-314; the sequence is KMSKS. Residue Lys313 participates in ATP binding. The tRNA-binding domain occupies 560-660; sequence DFFKVELRVA…QNLPNGTKIK (101 aa).

Belongs to the class-I aminoacyl-tRNA synthetase family. MetG type 2B subfamily. In terms of assembly, homodimer.

It is found in the cytoplasm. It catalyses the reaction tRNA(Met) + L-methionine + ATP = L-methionyl-tRNA(Met) + AMP + diphosphate. Is required not only for elongation of protein synthesis but also for the initiation of all mRNA translation through initiator tRNA(fMet) aminoacylation. The polypeptide is Methionine--tRNA ligase 1 (Bacillus cereus (strain ATCC 14579 / DSM 31 / CCUG 7414 / JCM 2152 / NBRC 15305 / NCIMB 9373 / NCTC 2599 / NRRL B-3711)).